Here is a 525-residue protein sequence, read N- to C-terminus: Bifunctional purine biosynthesis protein PurH (525 aa).

The MGS-like domain maps to 1-145 (MSNVERALIS…KNNASVGIVT (145 aa)).

This sequence belongs to the PurH family.

The enzyme catalyses (6R)-10-formyltetrahydrofolate + 5-amino-1-(5-phospho-beta-D-ribosyl)imidazole-4-carboxamide = 5-formamido-1-(5-phospho-D-ribosyl)imidazole-4-carboxamide + (6S)-5,6,7,8-tetrahydrofolate. The catalysed reaction is IMP + H2O = 5-formamido-1-(5-phospho-D-ribosyl)imidazole-4-carboxamide. It functions in the pathway purine metabolism; IMP biosynthesis via de novo pathway; 5-formamido-1-(5-phospho-D-ribosyl)imidazole-4-carboxamide from 5-amino-1-(5-phospho-D-ribosyl)imidazole-4-carboxamide (10-formyl THF route): step 1/1. It participates in purine metabolism; IMP biosynthesis via de novo pathway; IMP from 5-formamido-1-(5-phospho-D-ribosyl)imidazole-4-carboxamide: step 1/1. The sequence is that of Bifunctional purine biosynthesis protein PurH from Alcanivorax borkumensis (strain ATCC 700651 / DSM 11573 / NCIMB 13689 / SK2).